A 242-amino-acid chain; its full sequence is MPWPSRKRDKGAVADKKEPDAKIAKTEEETEDKEEEEKSTKPPAGSSKSGLKNWKKAKESDSGGEESKITYCHWLLKSEPESRLEKGVDVKFSIEDLKAQPNQTTFWEGVRNYQARNFLRAMKLGQQAFFYHSNCKEPGIVGIVKIVKEAYPDHTQFDQKDPHYDSSSRKENPKWSMVDVQFVRMTKRFIPLSEIKTHHLAHKADGGPLKNMMLFSRQRLSIQPLTQEEFDFVLSLEEEKPH.

The disordered stretch occupies residues 1–64; it reads MPWPSRKRDK…KKAKESDSGG (64 aa). Positions 6–10 match the Nuclear localization signal motif; it reads RKRDK. Residues 10 to 27 show a composition bias toward basic and acidic residues; it reads KGAVADKKEPDAKIAKTE. The span at 28–37 shows a compositional bias: acidic residues; that stretch reads EETEDKEEEE.

Post-translationally, undergoes proteolytic processing during lymphocyte apoptosis. Phosphorylated. As to expression, expressed at high levels in bursa of fabricus, thymus and spleen. Also found in the liver, intestine, heart and brain.

It localises to the nucleus. Its function is as follows. Specifically binds 5-hydroxymethylcytosine (5hmC), suggesting that it acts as a specific reader of 5hmC. The polypeptide is Thymocyte nuclear protein 1 (THYN1) (Gallus gallus (Chicken)).